The following is a 338-amino-acid chain: 1-aminocyclopropane-1-carboxylate deaminase (338 aa).

Position 51 is an N6-(pyridoxal phosphate)lysine (Lys-51). The Nucleophile role is filled by Ser-78.

This sequence belongs to the ACC deaminase/D-cysteine desulfhydrase family. As to quaternary structure, homotrimer. Pyridoxal 5'-phosphate serves as cofactor.

It carries out the reaction 1-aminocyclopropane-1-carboxylate + H2O = 2-oxobutanoate + NH4(+). Its function is as follows. Catalyzes a cyclopropane ring-opening reaction, the irreversible conversion of 1-aminocyclopropane-1-carboxylate (ACC) to ammonia and alpha-ketobutyrate. Allows growth on ACC as a nitrogen source. This Burkholderia thailandensis (strain ATCC 700388 / DSM 13276 / CCUG 48851 / CIP 106301 / E264) protein is 1-aminocyclopropane-1-carboxylate deaminase.